Reading from the N-terminus, the 222-residue chain is 2-C-methyl-D-erythritol 2,4-cyclodiphosphate synthase, chloroplastic (222 aa).

Residues 1–43 (MATASSLFLASPVATAPTARARSTPSASPARPSLRLRRPSTLA) constitute a chloroplast transit peptide. Positions 73 and 75 each coordinate a divalent metal cation. Substrate-binding positions include 73 to 75 (DLH), 99 to 100 (HS), 103 to 111 (DVLLHCVVD), 121 to 123 (DIG), 126 to 130 (FPDSD), Asp130, 165 to 171 (LQKPKIS), and 196 to 200 (AKTHE). His107 is an a divalent metal cation binding site.

Belongs to the IspF family. In terms of assembly, homotrimer. The cofactor is a divalent metal cation. Expressed in roots, leaves, stems, leaf sheaths and young panicles.

Its subcellular location is the plastid. The protein resides in the chloroplast. It carries out the reaction 4-CDP-2-C-methyl-D-erythritol 2-phosphate = 2-C-methyl-D-erythritol 2,4-cyclic diphosphate + CMP. It participates in isoprenoid biosynthesis; isopentenyl diphosphate biosynthesis via DXP pathway; isopentenyl diphosphate from 1-deoxy-D-xylulose 5-phosphate: step 4/6. Its function is as follows. Enzyme of the plastid non-mevalonate pathway for isoprenoid biosynthesis that converts 4-diphosphocytidyl-2C-methyl-D-erythritol 2-phosphate into 2C-methyl-D-erythritol 2,4-cyclodiphosphate and CMP. Is essential for chloroplast development. The chain is 2-C-methyl-D-erythritol 2,4-cyclodiphosphate synthase, chloroplastic from Oryza sativa subsp. japonica (Rice).